Here is a 570-residue protein sequence, read N- to C-terminus: Sulfite reductase [NADPH] hemoprotein beta-component (570 aa).

Residues C434, C440, C479, and C483 each contribute to the [4Fe-4S] cluster site. Residue C483 participates in siroheme binding.

It belongs to the nitrite and sulfite reductase 4Fe-4S domain family. Alpha(8)-beta(8). The alpha component is a flavoprotein, the beta component is a hemoprotein. Siroheme is required as a cofactor. It depends on [4Fe-4S] cluster as a cofactor.

The catalysed reaction is hydrogen sulfide + 3 NADP(+) + 3 H2O = sulfite + 3 NADPH + 4 H(+). The protein operates within sulfur metabolism; hydrogen sulfide biosynthesis; hydrogen sulfide from sulfite (NADPH route): step 1/1. Functionally, component of the sulfite reductase complex that catalyzes the 6-electron reduction of sulfite to sulfide. This is one of several activities required for the biosynthesis of L-cysteine from sulfate. This chain is Sulfite reductase [NADPH] hemoprotein beta-component, found in Enterobacter sp. (strain 638).